Consider the following 582-residue polypeptide: DBIRD complex subunit ZNF326 (582 aa).

Residues 1 to 124 (MDFEDDYTHS…YRNSLDSFGG (124 aa)) form a mediates transcriptional activation region. Phosphoserine is present on residues S48, S56, S63, S69, S81, S82, S91, S106, S114, S118, S121, and S137. A Glycyl lysine isopeptide (Lys-Gly) (interchain with G-Cter in SUMO2) cross-link involves residue K140. The disordered stretch occupies residues 154 to 194 (YSSYSSFSSPHMKPAPVGSRGRGTPAYPESTFGSRNYDAFG). At R173 the chain carries Omega-N-methylarginine. Position 212 is a phosphoserine (S212). The residue at position 235 (R235) is an Omega-N-methylarginine. The short motif at 238–260 (KRKMMQPFNKPSGTFIKKPKLAK) is the Bipartite nuclear localization signal element. Residue K240 forms a Glycyl lysine isopeptide (Lys-Gly) (interchain with G-Cter in SUMO2) linkage. The interval 243-302 (QPFNKPSGTFIKKPKLAKPMEKISLSKSPTKTDPKNEEEEKRRIEARREKQRRRREKNSE) is disordered. K247 is modified (N6-acetyllysine; alternate). Residue K247 forms a Glycyl lysine isopeptide (Lys-Gly) (interchain with G-Cter in SUMO2); alternate linkage. S249 is modified (phosphoserine). T251 is modified (phosphothreonine). Glycyl lysine isopeptide (Lys-Gly) (interchain with G-Cter in SUMO2) cross-links involve residues K254 and K264. At S270 the chain carries Phosphoserine. Residues 272 to 290 (TKTDPKNEEEEKRRIEARR) show a composition bias toward basic and acidic residues. The C2H2 AKAP95-type 1 zinc-finger motif lies at 314–336 (CSFCKFRTFEEKDIELHLESSSH). K401 is covalently cross-linked (Glycyl lysine isopeptide (Lys-Gly) (interchain with G-Cter in SUMO2)). A C2H2 AKAP95-type 2 zinc finger spans residues 407-430 (CSACSVYIPALHSSVQQHLKSPDH). Glycyl lysine isopeptide (Lys-Gly) (interchain with G-Cter in SUMO2) cross-links involve residues K459 and K467. Residues 472 to 582 (FEIQDHSQDQ…DFPVEQPEEN (111 aa)) are disordered. The segment covering 483-523 (IEGDEEDEEKIDEPIEEEEDEDEEEEAEEVGEVEEVEEVEE) has biased composition (acidic residues). A compositionally biased stretch (gly residues) spans 530 to 545 (EGEGNIQGVGEGGEVG). Positions 552-567 (GVGEVEEVEELEEETA) are enriched in acidic residues.

The protein belongs to the AKAP95 family. In terms of assembly, component of the DBIRD complex. Interacts with CCAR2; the interaction is direct.

It localises to the nucleus matrix. Its function is as follows. Core component of the DBIRD complex, a multiprotein complex that acts at the interface between core mRNP particles and RNA polymerase II (RNAPII) and integrates transcript elongation with the regulation of alternative splicing: the DBIRD complex affects local transcript elongation rates and alternative splicing of a large set of exons embedded in (A + T)-rich DNA regions. May play a role in neuronal differentiation and is able to bind DNA and activate expression in vitro. The sequence is that of DBIRD complex subunit ZNF326 (ZNF326) from Homo sapiens (Human).